The following is a 224-amino-acid chain: Methylamine utilization ferredoxin-type protein MauM (224 aa).

An N-terminal signal peptide occupies residues 1 to 41; it reads MEARMTGRRKVTRRDAMADAARAVGVACLGGFSLAALVRTA. 4 consecutive 4Fe-4S ferredoxin-type domains span residues 54-84, 91-124, 133-169, and 177-208; these read ALPE…LAEW, GTPF…RDIP, VAVL…LEPQ, and MIPV…VLPR. [4Fe-4S] cluster is bound by residues Cys-64, Cys-67, Cys-70, Cys-74, Cys-102, Cys-105, Cys-110, Cys-114, Cys-142, Cys-150, Cys-153, Cys-157, Cys-186, Cys-189, Cys-192, and Cys-196.

The protein operates within one-carbon metabolism; methylamine degradation. In terms of biological role, involved in electron transfer. The polypeptide is Methylamine utilization ferredoxin-type protein MauM (mauM) (Paracoccus denitrificans (strain Pd 1222)).